A 172-amino-acid polypeptide reads, in one-letter code: Protein-export protein SecB (172 aa).

The protein belongs to the SecB family. In terms of assembly, homotetramer, a dimer of dimers. One homotetramer interacts with 1 SecA dimer.

Its subcellular location is the cytoplasm. In terms of biological role, one of the proteins required for the normal export of preproteins out of the cell cytoplasm. It is a molecular chaperone that binds to a subset of precursor proteins, maintaining them in a translocation-competent state. It also specifically binds to its receptor SecA. This Bordetella avium (strain 197N) protein is Protein-export protein SecB.